The chain runs to 109 residues: Large ribosomal subunit protein uL1 (109 aa).

Belongs to the universal ribosomal protein uL1 family. Part of the 50S ribosomal subunit.

In terms of biological role, binds directly to 23S rRNA. The L1 stalk is quite mobile in the ribosome, and is involved in E site tRNA release. Its function is as follows. Protein L1 is also a translational repressor protein, it controls the translation of the L11 operon by binding to its mRNA. The protein is Large ribosomal subunit protein uL1 (rplA) of Aquifex pyrophilus.